A 342-amino-acid polypeptide reads, in one-letter code: Holliday junction branch migration complex subunit RuvB (342 aa).

The tract at residues 1-179 (MTNILSPEKS…FGIPMRLNFY (179 aa)) is large ATPase domain (RuvB-L). Residues Ile18, Arg19, Gly60, Lys63, Thr64, Thr65, 126-128 (EDF), Arg169, Tyr179, and Arg216 each bind ATP. Residue Thr64 coordinates Mg(2+). The segment at 180 to 250 (NTGELKKVLN…ISDFGLNRLE (71 aa)) is small ATPAse domain (RuvB-S). The tract at residues 253–342 (RIGLDSNDYR…HQFNIFNENE (90 aa)) is head domain (RuvB-H). 3 residues coordinate DNA: Arg289, Arg308, and Arg313.

The protein belongs to the RuvB family. As to quaternary structure, homohexamer. Forms an RuvA(8)-RuvB(12)-Holliday junction (HJ) complex. HJ DNA is sandwiched between 2 RuvA tetramers; dsDNA enters through RuvA and exits via RuvB. An RuvB hexamer assembles on each DNA strand where it exits the tetramer. Each RuvB hexamer is contacted by two RuvA subunits (via domain III) on 2 adjacent RuvB subunits; this complex drives branch migration. In the full resolvosome a probable DNA-RuvA(4)-RuvB(12)-RuvC(2) complex forms which resolves the HJ.

It localises to the cytoplasm. It carries out the reaction ATP + H2O = ADP + phosphate + H(+). The RuvA-RuvB-RuvC complex processes Holliday junction (HJ) DNA during genetic recombination and DNA repair, while the RuvA-RuvB complex plays an important role in the rescue of blocked DNA replication forks via replication fork reversal (RFR). RuvA specifically binds to HJ cruciform DNA, conferring on it an open structure. The RuvB hexamer acts as an ATP-dependent pump, pulling dsDNA into and through the RuvAB complex. RuvB forms 2 homohexamers on either side of HJ DNA bound by 1 or 2 RuvA tetramers; 4 subunits per hexamer contact DNA at a time. Coordinated motions by a converter formed by DNA-disengaged RuvB subunits stimulates ATP hydrolysis and nucleotide exchange. Immobilization of the converter enables RuvB to convert the ATP-contained energy into a lever motion, pulling 2 nucleotides of DNA out of the RuvA tetramer per ATP hydrolyzed, thus driving DNA branch migration. The RuvB motors rotate together with the DNA substrate, which together with the progressing nucleotide cycle form the mechanistic basis for DNA recombination by continuous HJ branch migration. Branch migration allows RuvC to scan DNA until it finds its consensus sequence, where it cleaves and resolves cruciform DNA. The chain is Holliday junction branch migration complex subunit RuvB from Rickettsia conorii (strain ATCC VR-613 / Malish 7).